The following is a 142-amino-acid chain: Galactose-6-phosphate isomerase subunit LacA 2 (142 aa).

The protein belongs to the LacAB/RpiB family. As to quaternary structure, heteromultimeric protein consisting of LacA and LacB.

It catalyses the reaction aldehydo-D-galactose 6-phosphate = keto-D-tagatose 6-phosphate. Its pathway is carbohydrate metabolism; D-galactose 6-phosphate degradation; D-tagatose 6-phosphate from D-galactose 6-phosphate: step 1/1. In Streptococcus pyogenes serotype M1, this protein is Galactose-6-phosphate isomerase subunit LacA 2.